The sequence spans 366 residues: Caffeic acid 3-O-methyltransferase (366 aa).

A substrate-binding site is contributed by 131–137 (MNQDKIL). The substrate binding stretch occupies residues 163-181 (AFEYHGTDPRFNKIFNRGM). Glycine 209, aspartate 232, aspartate 252, methionine 253, and lysine 266 together coordinate S-adenosyl-L-methionine. The active-site Proton acceptor is histidine 270.

The protein belongs to the class I-like SAM-binding methyltransferase superfamily. Cation-independent O-methyltransferase family. COMT subfamily. As to quaternary structure, homodimer.

It catalyses the reaction (E)-caffeate + S-adenosyl-L-methionine = (E)-ferulate + S-adenosyl-L-homocysteine + H(+). Its pathway is aromatic compound metabolism; phenylpropanoid biosynthesis. Catalyzes the conversion of caffeic acid to ferulic acid and of 5-hydroxyferulic acid to sinapic acid. The resulting products may subsequently be converted to the corresponding alcohols that are incorporated into lignins. The protein is Caffeic acid 3-O-methyltransferase (OMT) of Eucalyptus gunnii (Cider gum).